The chain runs to 320 residues: Acetyl-coenzyme A carboxylase carboxyl transferase subunit alpha (320 aa).

Residues 34–288 (RLEEALEAAR…GEALERVLAG (255 aa)) enclose the CoA carboxyltransferase C-terminal domain.

The protein belongs to the AccA family. In terms of assembly, acetyl-CoA carboxylase is a heterohexamer composed of biotin carboxyl carrier protein (AccB), biotin carboxylase (AccC) and two subunits each of ACCase subunit alpha (AccA) and ACCase subunit beta (AccD).

The protein resides in the cytoplasm. The catalysed reaction is N(6)-carboxybiotinyl-L-lysyl-[protein] + acetyl-CoA = N(6)-biotinyl-L-lysyl-[protein] + malonyl-CoA. Its pathway is lipid metabolism; malonyl-CoA biosynthesis; malonyl-CoA from acetyl-CoA: step 1/1. Component of the acetyl coenzyme A carboxylase (ACC) complex. First, biotin carboxylase catalyzes the carboxylation of biotin on its carrier protein (BCCP) and then the CO(2) group is transferred by the carboxyltransferase to acetyl-CoA to form malonyl-CoA. In Rubrobacter xylanophilus (strain DSM 9941 / JCM 11954 / NBRC 16129 / PRD-1), this protein is Acetyl-coenzyme A carboxylase carboxyl transferase subunit alpha.